The primary structure comprises 55 residues: Ferredoxin (55 aa).

4Fe-4S ferredoxin-type domains are found at residues 2-26 and 27-55; these read YKIT…ISEG and SIYE…VPED. [4Fe-4S] cluster-binding residues include Cys8, Cys11, Cys14, Cys18, Cys36, Cys39, Cys42, and Cys46.

[4Fe-4S] cluster is required as a cofactor.

Functionally, ferredoxins are iron-sulfur proteins that transfer electrons in a wide variety of metabolic reactions. This Butyribacterium methylotrophicum protein is Ferredoxin.